Consider the following 309-residue polypeptide: Probable non-structural 36.3 kDa protein (309 aa).

The polypeptide is Probable non-structural 36.3 kDa protein (S6) (Avena sativa (Oat)).